The primary structure comprises 277 residues: Undecaprenyl-diphosphatase (277 aa).

7 helical membrane passes run 1–21 (MTWIEAIILGLVQGLTEFLPI), 41–61 (GAAFTAITQLGTELAVLIYFW), 90–110 (WLIIVGSIPIAVLGLLLEDWI), 114–134 (FRSLWITATMLIVFGVLLALA), 191–211 (AFLLAVPAVFASGLYKLYTSL), 224–244 (ETLVATAVAFVVAYAVIAWLM), and 255–275 (FVWYRILLGGVLFALLGAGVI).

It belongs to the UppP family.

The protein resides in the cell membrane. It carries out the reaction di-trans,octa-cis-undecaprenyl diphosphate + H2O = di-trans,octa-cis-undecaprenyl phosphate + phosphate + H(+). In terms of biological role, catalyzes the dephosphorylation of undecaprenyl diphosphate (UPP). Confers resistance to bacitracin. In Micrococcus luteus (strain ATCC 4698 / DSM 20030 / JCM 1464 / CCM 169 / CCUG 5858 / IAM 1056 / NBRC 3333 / NCIMB 9278 / NCTC 2665 / VKM Ac-2230) (Micrococcus lysodeikticus), this protein is Undecaprenyl-diphosphatase.